The sequence spans 540 residues: Anti-sigma-I factor RsgI7 (540 aa).

Residues methionine 1–arginine 48 form the RsgI N-terminal anti-sigma domain. The Cytoplasmic segment spans residues methionine 1–threonine 50. A helical membrane pass occupies residues leucine 51–serine 73. The Extracellular portion of the chain corresponds to tyrosine 74–cysteine 540. Composition is skewed to basic and acidic residues over residues aspartate 238–asparagine 256, serine 319–lysine 329, asparagine 338–serine 351, valine 359–glycine 370, and serine 398–lysine 419. Disordered stretches follow at residues aspartate 238–tyrosine 429 and glutamine 481–cysteine 540. Positions lysine 451–threonine 501 form a coiled coil.

Interacts (via RsgI N-terminal anti-sigma domain) with SigI7.

It is found in the cell membrane. Its function is as follows. Anti-sigma factor for SigI7. Negatively regulates SigI7 activity through direct interaction. In Acetivibrio thermocellus (strain ATCC 27405 / DSM 1237 / JCM 9322 / NBRC 103400 / NCIMB 10682 / NRRL B-4536 / VPI 7372) (Clostridium thermocellum), this protein is Anti-sigma-I factor RsgI7.